Here is a 361-residue protein sequence, read N- to C-terminus: KDEL-tailed cysteine endopeptidase CEP2 (361 aa).

Positions 1 to 20 are cleaved as a signal peptide; it reads MKKLLLIFLFSLVILQTACG. Residues 21–127 constitute a propeptide, activation peptide; the sequence is FDYDDKEIES…FMYDHENLSK (107 aa). N-linked (GlcNAc...) asparagine glycosylation is found at asparagine 75 and asparagine 124. Cystine bridges form between cysteine 149-cysteine 191, cysteine 183-cysteine 224, and cysteine 282-cysteine 333. Cysteine 152 is a catalytic residue. Active-site residues include histidine 288 and asparagine 308. A Prevents secretion from ER motif is present at residues 358-361; sequence KDEL.

It belongs to the peptidase C1 family. In terms of tissue distribution, expressed in roots, stems, rosette and cauline leaves, flowers, buds and green siliques. Found in the tip of young primary leaves, in very young root tips and at later stages in all tissues of lateral root, including the vascular bundle. Not expressed in lateral root primordia, while directly emerging through the epidermis.

The protein resides in the endoplasmic reticulum. In terms of biological role, involved in the final stage of developmental programmed cell death and in intercalation of new cells. Cleaves extensins, thus probably supporting the final cell collapse. This chain is KDEL-tailed cysteine endopeptidase CEP2, found in Arabidopsis thaliana (Mouse-ear cress).